The following is a 314-amino-acid chain: tRNA-cytidine(32) 2-sulfurtransferase (314 aa).

The short motif at 49 to 54 (SGGKDS) is the PP-loop motif element. The [4Fe-4S] cluster site is built by C124, C127, and C215.

It belongs to the TtcA family. Homodimer. Requires Mg(2+) as cofactor. The cofactor is [4Fe-4S] cluster.

The protein localises to the cytoplasm. It catalyses the reaction cytidine(32) in tRNA + S-sulfanyl-L-cysteinyl-[cysteine desulfurase] + AH2 + ATP = 2-thiocytidine(32) in tRNA + L-cysteinyl-[cysteine desulfurase] + A + AMP + diphosphate + H(+). It participates in tRNA modification. In terms of biological role, catalyzes the ATP-dependent 2-thiolation of cytidine in position 32 of tRNA, to form 2-thiocytidine (s(2)C32). The sulfur atoms are provided by the cysteine/cysteine desulfurase (IscS) system. The sequence is that of tRNA-cytidine(32) 2-sulfurtransferase from Histophilus somni (strain 2336) (Haemophilus somnus).